A 366-amino-acid chain; its full sequence is GDSL esterase/lipase LTL1 (366 aa).

The first 27 residues, 1–27 (MNINCSPLGFLISLFFIVTFLAPQVKS), serve as a signal peptide directing secretion. The Nucleophile role is filled by S36. N117 carries N-linked (GlcNAc...) asparagine glycosylation. Active-site residues include D326 and H329. A glycan (N-linked (GlcNAc...) asparagine) is linked at N354.

This sequence belongs to the 'GDSL' lipolytic enzyme family. As to quaternary structure, binds to VLG at the endomembrane system. Mostly expressed in flowers, reproductive stems and rosette leaves, and, to a lower extent, in roots.

The protein resides in the secreted. Its function is as follows. Involved in the mechanisms of salt tolerance. Mediates resistance to LiCl and NaCl. This chain is GDSL esterase/lipase LTL1, found in Arabidopsis thaliana (Mouse-ear cress).